The sequence spans 568 residues: Proton-coupled zinc antiporter SLC30A9, mitochondrial (568 aa).

A mitochondrion-targeting transit peptide spans 1–67 (MLPGLAAAAA…IGTLSQVKLY (67 aa)). 5 consecutive transmembrane segments (helical) span residues 239-259 (VVMVAICINGLNCFFKFLAWI), 314-334 (GVGIFMMGAGLSWYHGVMGLL), 342-362 (LLWAYCILAGSLVSEGATLLV), 392-412 (VILLEDTAAVLGVIIAATCMG), and 424-444 (SLGSLGVGTLLGMVSAFLIYT). The LXXLL motif signature appears at 462–466 (LTELL).

This sequence belongs to the cation diffusion facilitator (CDF) transporter (TC 2.A.4) family. SLC30A subfamily. In terms of assembly, interacts with GRIP1, ESR1 and AR. As to expression, ubiquitously expressed in fetal and adult tissues and cancer cell lines.

The protein resides in the mitochondrion membrane. It is found in the nucleus. The protein localises to the endoplasmic reticulum. The enzyme catalyses Zn(2+)(in) + 2 H(+)(out) = Zn(2+)(out) + 2 H(+)(in). Mitochondrial proton-coupled zinc ion antiporter mediating the export of zinc from the mitochondria and involved in zinc homeostasis, zinc mobilization as well as mitochondrial morphology and health. In nucleus, functions as a secondary coactivator for nuclear receptors by cooperating with p160 coactivators subtypes. Plays a role in transcriptional activation of Wnt-responsive genes. This Homo sapiens (Human) protein is Proton-coupled zinc antiporter SLC30A9, mitochondrial.